Consider the following 525-residue polypeptide: ALBINO3-like protein 2, chloroplastic (525 aa).

The next 4 helical transmembrane spans lie at 99-119 (WMIIASSTVAVRLALLPLLIL), 167-187 (LWFFPYLSVQLPCFFLLMASI), 217-237 (FGPVFPILIATFHYINIQISF), and 262-282 (ILSVPLFFVGYAIPQGSLVYW). 4 TPR repeats span residues 346 to 379 (PEELLSLSVQVLSKGDKETSIQLLRLALEKDPGY), 380 to 413 (VRGLVLMGQALLQKTQLSEATEYLELAISKLLDE), 425 to 458 (MLASQWAGAAYVQQGKLKSGIIHLERVAKLREPG), and 467 to 500 (FEALLLLSSALYKEGQSDEAAKILRVVVDHNPAY).

This sequence belongs to the OXA1/ALB3/YidC (TC 2.A.9.2) family.

It localises to the plastid. The protein resides in the chloroplast thylakoid membrane. Functionally, probably required for the insertion of integral membrane proteins into the chloroplast thylakoid membranes. In Arabidopsis thaliana (Mouse-ear cress), this protein is ALBINO3-like protein 2, chloroplastic (ALB3L2).